The chain runs to 193 residues: Acyl carrier protein phosphodiesterase (193 aa).

Belongs to the AcpH family.

It carries out the reaction holo-[ACP] + H2O = apo-[ACP] + (R)-4'-phosphopantetheine + H(+). Converts holo-ACP to apo-ACP by hydrolytic cleavage of the phosphopantetheine prosthetic group from ACP. This chain is Acyl carrier protein phosphodiesterase, found in Salmonella choleraesuis (strain SC-B67).